A 602-amino-acid polypeptide reads, in one-letter code: Aspartate--tRNA(Asp/Asn) ligase (602 aa).

Glu170 contacts L-aspartate. The segment at 194–197 is aspartate; it reads QLFK. Position 216 (Arg216) interacts with L-aspartate. ATP-binding positions include 216-218 and Gln225; that span reads RDE. L-aspartate is bound at residue His448. Glu482 contacts ATP. Position 489 (Arg489) interacts with L-aspartate. Position 534 to 537 (534 to 537) interacts with ATP; the sequence is GWDR. The segment at 559 to 602 is disordered; it reads GGVDPLTDAPAPISAQQRKESGIDAKPEKKSEDKKSEGDTAEAK. Basic and acidic residues predominate over residues 575–602; that stretch reads QRKESGIDAKPEKKSEDKKSEGDTAEAK.

Belongs to the class-II aminoacyl-tRNA synthetase family. Type 1 subfamily. In terms of assembly, homodimer.

Its subcellular location is the cytoplasm. It catalyses the reaction tRNA(Asx) + L-aspartate + ATP = L-aspartyl-tRNA(Asx) + AMP + diphosphate. In terms of biological role, aspartyl-tRNA synthetase with relaxed tRNA specificity since it is able to aspartylate not only its cognate tRNA(Asp) but also tRNA(Asn). Reaction proceeds in two steps: L-aspartate is first activated by ATP to form Asp-AMP and then transferred to the acceptor end of tRNA(Asp/Asn). This chain is Aspartate--tRNA(Asp/Asn) ligase, found in Rhodococcus erythropolis (strain PR4 / NBRC 100887).